The sequence spans 679 residues: Stress-70 protein, mitochondrial (679 aa).

The transit peptide at 1 to 46 (MISATRAAAARLVGTAASRTPAAARHQDGWNGLSHEAFRFVSRRDY) directs the protein to the mitochondrion. An interaction with NFS1 region spans residues 1 to 432 (MISATRAAAA…IQGGVLAGDV (432 aa)). Residues Thr63 and Asn64 each coordinate ADP. Residues 63–431 (TNSCVAVMEG…AIQGGVLAGD (369 aa)) are nucleotide-binding domain (NBD). Lys76 is subject to N6-acetyllysine. Thr87 carries the phosphothreonine modification. 2 positions are modified to N6-acetyllysine; alternate: Lys135 and Lys138. Lys135 and Lys138 each carry N6-succinyllysine; alternate. Lys143 carries the post-translational modification N6-acetyllysine. Position 206 is an N6-acetyllysine; alternate (Lys206). Lys206 bears the N6-succinyllysine; alternate mark. An N6-malonyllysine; alternate modification is found at Lys206. Lys234 and Lys288 each carry N6-acetyllysine. Residue Lys300 is modified to N6-acetyllysine; alternate. Lys300 carries the post-translational modification N6-succinyllysine; alternate. Positions 313, 316, and 320 each coordinate ADP. Residue Lys360 is modified to N6-acetyllysine; alternate. An N6-succinyllysine; alternate modification is found at Lys360. An N6-succinyllysine modification is found at Lys368. 2 residues coordinate ADP: Gly388 and Arg391. N6-succinyllysine is present on Lys394. Ser408 is subject to Phosphoserine. Positions 432–441 (VTDVLLLDVT) are interdomain linker. The interaction with FXN and ISCU stretch occupies residues 432–679 (VTDVLLLDVT…QKEDQKEEKQ (248 aa)). A substrate-binding domain (SBD) region spans residues 442–679 (PLSLGIETLG…QKEDQKEEKQ (238 aa)). An Omega-N-methylarginine modification is found at Arg513. Lys567 and Lys600 each carry N6-acetyllysine; alternate. N6-succinyllysine; alternate occurs at positions 567 and 600. N6-succinyllysine is present on Lys610. Lys612 carries the post-translational modification N6-acetyllysine. Lys646 is subject to N6-acetyllysine; alternate. The residue at position 646 (Lys646) is an N6-succinyllysine; alternate. Positions 656–679 (ASEREGSGSSGTGEQKEDQKEEKQ) are disordered. Basic and acidic residues predominate over residues 669-679 (EQKEDQKEEKQ).

The protein belongs to the heat shock protein 70 family. In terms of assembly, interacts strongly with the intermediate form of FXN and weakly with its mature form. Interacts with HSCB. Associates with the mitochondrial contact site and cristae organizing system (MICOS) complex, composed of at least MICOS10/MIC10, CHCHD3/MIC19, CHCHD6/MIC25, APOOL/MIC27, IMMT/MIC60, APOO/MIC23/MIC26 and QIL1/MIC13. This complex was also known under the names MINOS or MitOS complex. The MICOS complex associates with mitochondrial outer membrane proteins SAMM50, MTX1, MTX2 and DNAJC11, mitochondrial inner membrane protein TMEM11 and with HSPA9. Interacts with DNLZ, the interaction is required to prevent self-aggregation. Interacts with TESPA1. Interacts with PDPN. Interacts with NFU1, NFS1 and ISCU. Interacts with TP53; the interaction promotes TP53 degradation. Interacts (via SBD domain) with UBXN2A; the interaction with UBXN2A inhibits HSPA9/MOT-2 interaction with and degradation of TP53, thereby promotes TP53 translocation to the nucleus. Interacts with ITPR1 AND VDAC1; this interaction couples ITPR1 to VDAC1. Component of the TIM23 mitochondrial inner membrane pre-sequence translocase complex.

The protein localises to the mitochondrion. The protein resides in the nucleus. Its subcellular location is the nucleolus. It is found in the cytoplasm. It localises to the mitochondrion matrix. The enzyme catalyses ATP + H2O = ADP + phosphate + H(+). Its activity is regulated as follows. The chaperone activity is regulated by ATP-induced allosteric coupling of the nucleotide-binding (NBD) and substrate-binding (SBD) domains. ATP binding in the NBD leads to a conformational change in the NBD, which is transferred through the interdomain linker (IDL) to the substrate-binding domain (SBD). This elicits a reduced substrate affinity and a faster substrate exchange rate. Upon hydrolysis of ATP to ADP, the protein undergoes a conformational change that increases its affinity for substrate proteins. It cycles through repeated phases of ATP hydrolysis and nucleotide exchange, facilitating repeated cycles of substrate binding and release. Functions in collaboration with co-chaperones. Functions with the co-chaperone, DNLZ, to maintain solubility and regulate ATP hydrolysis. Nucleotide exchange factors, GRPEL1 and GRPEL2, accelerate nucleotide exchange. Mitochondrial chaperone that plays a key role in mitochondrial protein import, folding, and assembly. Plays an essential role in the protein quality control system, the correct folding of proteins, the re-folding of misfolded proteins, and the targeting of proteins for subsequent degradation. These processes are achieved through cycles of ATP binding, ATP hydrolysis, and ADP release, mediated by co-chaperones. In mitochondria, it associates with the TIM (translocase of the inner membrane) protein complex to assist in the import and folding of mitochondrial proteins. Plays an important role in mitochondrial iron-sulfur cluster (ISC) biogenesis, interacts with and stabilizes ISC cluster assembly proteins FXN, NFU1, NFS1 and ISCU. Regulates erythropoiesis via stabilization of ISC assembly. Regulates mitochondrial calcium-dependent apoptosis by coupling two calcium channels, ITPR1 and VDAC1, at the mitochondria-associated endoplasmic reticulum (ER) membrane to facilitate calcium transport from the ER lumen to the mitochondria intermembrane space, providing calcium for the downstream calcium channel MCU, which releases it into the mitochondrial matrix. Although primarily located in the mitochondria, it is also found in other cellular compartments. In the cytosol, it associates with proteins involved in signaling, apoptosis, or senescence. It may play a role in cell cycle regulation via its interaction with and promotion of degradation of TP53. May play a role in the control of cell proliferation and cellular aging. Protects against reactive oxygen species (ROS). Extracellular HSPA9 plays a cytoprotective role by preventing cell lysis following immune attack by the membrane attack complex by disrupting formation of the complex. This is Stress-70 protein, mitochondrial from Cricetulus griseus (Chinese hamster).